Reading from the N-terminus, the 837-residue chain is Vacuolar membrane protease (837 aa).

At 1 to 36 (MSEEEVHDTSSEASEVFTNQPNAFVRGVRSIFGYRK) the chain is on the cytoplasmic side. The chain crosses the membrane as a helical span at residues 37–57 (TSLTLFVILTIVVTAGLSFYD). The Vacuolar segment spans residues 58-355 (NSLELTIELP…FATPISALAR (298 aa)). A glycan (N-linked (GlcNAc...) asparagine) is linked at asparagine 143. The Zn(2+) site is built by histidine 157 and aspartate 169. Glutamate 201 serves as the catalytic Proton acceptor. Positions 202, 227, and 299 each coordinate Zn(2+). A helical membrane pass occupies residues 356–376 (VNLVLLVLFPVVSTPLLFVIV). Over 377–384 (KYKKWKLR) the chain is Cytoplasmic. A helical membrane pass occupies residues 385-405 (VTNFLGVPLAMGLAVAVGQVG). Topologically, residues 406 to 415 (NPMLVSSHPM) are vacuolar. The chain crosses the membrane as a helical span at residues 416–436 (MVVATTTSIVVLVYYVVLNGV). The Cytoplasmic portion of the chain corresponds to 437–446 (DWVNTSSDQK). A helical membrane pass occupies residues 447-467 (LVTMIEVSFVYWVVLVYVTWS). Topologically, residues 468 to 474 (GGDHTGE) are vacuolar. A helical transmembrane segment spans residues 475 to 495 (FGVTVLFFVQASTSLLGLIGW). The Cytoplasmic segment spans residues 496 to 539 (TFTRVRGGDEPLLSGEEERYGTEDERDTEKPLVEHNYDWSLQYL). A helical transmembrane segment spans residues 540–560 (LIVPVSSLVVYNSGWLVLEGV). Residue asparagine 561 is glycosylated (N-linked (GlcNAc...) asparagine). The Vacuolar portion of the chain corresponds to 561–572 (NKTVQESLASEH). The chain crosses the membrane as a helical span at residues 573–593 (LIYWIVVVFSQFLVLPVVPFI). Over 594 to 598 (TKFNR) the chain is Cytoplasmic. The helical transmembrane segment at 599 to 619 (YIVLGLSVVVVVGVLMSMAVH) threads the bilayer. At 620–837 (PFNQGSPMKL…LVGVVKHVDV (218 aa)) the chain is on the vacuolar side. N-linked (GlcNAc...) asparagine glycosylation occurs at asparagine 689.

It belongs to the peptidase M28 family. It depends on Zn(2+) as a cofactor.

It localises to the vacuole membrane. In terms of biological role, may be involved in vacuolar sorting and osmoregulation. The polypeptide is Vacuolar membrane protease (Candida albicans (strain SC5314 / ATCC MYA-2876) (Yeast)).